We begin with the raw amino-acid sequence, 160 residues long: Protein MGF 300-2R (160 aa).

This sequence belongs to the asfivirus MGF 300 family.

Its function is as follows. Plays a role in virus cell tropism, and may be required for efficient virus replication in macrophages. The polypeptide is Protein MGF 300-2R (African swine fever virus (isolate Pig/Kenya/KEN-50/1950) (ASFV)).